The sequence spans 70 residues: Small ribosomal subunit protein bS21 (70 aa).

It belongs to the bacterial ribosomal protein bS21 family.

This Wolinella succinogenes (strain ATCC 29543 / DSM 1740 / CCUG 13145 / JCM 31913 / LMG 7466 / NCTC 11488 / FDC 602W) (Vibrio succinogenes) protein is Small ribosomal subunit protein bS21.